The sequence spans 600 residues: DNA polymerase alpha subunit B (600 aa).

The interval Glu-107–Thr-165 is disordered. Residue Ser-126 is modified to Phosphoserine. Residues Thr-127 and Thr-130 each carry the phosphothreonine modification. Residues Ala-139–Gln-159 show a composition bias toward low complexity. A phosphoserine mark is found at Ser-141, Ser-147, Ser-152, and Ser-154.

The protein belongs to the DNA polymerase alpha subunit B family. Component of the alpha DNA polymerase complex (also known as the alpha DNA polymerase-primase complex) consisting of four subunits: the catalytic subunit POLA1, the regulatory subunit POLA2, and the primase complex subunits PRIM1 and PRIM2 respectively. Within the complex, POLA1 directly interacts with PRIM2. In terms of processing, phosphorylated in a cell cycle-dependent manner, in G2/M phase.

Its subcellular location is the nucleus. Functionally, accessory subunit of the DNA polymerase alpha complex (also known as the alpha DNA polymerase-primase complex) which plays an essential role in the initiation of DNA synthesis. During the S phase of the cell cycle, the DNA polymerase alpha complex (composed of a catalytic subunit POLA1, an accessory subunit POLA2 and two primase subunits, the catalytic subunit PRIM1 and the regulatory subunit PRIM2) is recruited to DNA at the replicative forks via direct interactions with MCM10 and WDHD1. The primase subunit of the polymerase alpha complex initiates DNA synthesis by oligomerising short RNA primers on both leading and lagging strands. These primers are initially extended by the polymerase alpha catalytic subunit and subsequently transferred to polymerase delta and polymerase epsilon for processive synthesis on the lagging and leading strand, respectively. This Mus musculus (Mouse) protein is DNA polymerase alpha subunit B (Pola2).